We begin with the raw amino-acid sequence, 1634 residues long: Leucine-rich repeat-containing protein 37A3 (1634 aa).

A signal peptide spans 1–35; the sequence is MTSAQCPALACVMSPLRFWGPWPLLMWQLLWLLVK. Residues 36–1581 are Extracellular-facing; it reads EAQPLEWVKD…ELPGYGYTKK (1546 aa). Disordered regions lie at residues 53 to 104, 129 to 154, 172 to 531, 619 to 642, and 758 to 777; these read PLGP…ESTE, SQQD…KKDP, TPQS…VVVA, PEPT…KHPE, and EPTT…APRP. The LRR 1 repeat unit spans residues 137-160; it reads LSPQERLPVSPKKLKKDPAQRWSL. Polar residues-rich tracts occupy residues 172–189 and 223–237; these read TPQS…STDT and ETQN…QSSS. LRR repeat units lie at residues 230 to 253 and 267 to 290; these read LEDI…LEEE and ESSM…EDQA. A compositionally biased stretch (low complexity) spans 238-249; it reads LQQEAPAQLPQL. Asn-296 is a glycosylation site (N-linked (GlcNAc...) asparagine). Residues 307–326 show a composition bias toward polar residues; it reads TITSEPTNETESSQAQQETP. Positions 358–368 are enriched in low complexity; sequence SEQQQPVQPSE. Residues 433 to 446 are compositionally biased toward polar residues; that stretch reads LVHQEATTRLSGSG. The segment covering 482 to 493 has biased composition (low complexity); sequence SPEPINNENPSP. Polar residues predominate over residues 760–770; sequence TTETGHSTALE. LRR repeat units follow at residues 864–887, 888–911, 912–935, 937–959, 963–987, and 1002–1027; these read NGTF…VWKA, YSWT…SFEG, LLSL…TFEP, PFLK…TFQA, MQFL…LFKL, and LTTL…MACC. N-linked (GlcNAc...) asparagine glycosylation occurs at Asn-1079. LRR repeat units follow at residues 1124–1146 and 1151–1176; these read LPYF…KLPT and LAKI…SIQK. Composition is skewed to basic and acidic residues over residues 1181–1191 and 1201–1216; these read EVGRQSIRREQ and AEEK…ELKQ. Disordered regions lie at residues 1181-1227 and 1306-1329; these read EVGR…EKLA and RFHK…KVRK. An LRR 12 repeat occupies 1359 to 1384; it reads FSSLRDLSPQENPFLEVSAPSEHFIE. A helical membrane pass occupies residues 1582 to 1602; it reads LILALIVTGILTILIILLCLI. Residues 1603-1634 lie on the Cytoplasmic side of the membrane; the sequence is EICCHRRSLQEDEEGFSRDSEAPTEEESEALP. The interval 1614 to 1634 is disordered; it reads DEEGFSRDSEAPTEEESEALP. A compositionally biased stretch (acidic residues) spans 1624–1634; sequence APTEEESEALP.

This sequence belongs to the LRRC37A family.

The protein localises to the membrane. This chain is Leucine-rich repeat-containing protein 37A3 (LRRC37A3), found in Homo sapiens (Human).